A 906-amino-acid chain; its full sequence is Catenin alpha-1 (906 aa).

Thr2 bears the N-acetylthreonine mark. The tract at residues 2 to 228 is involved in homodimerization; the sequence is TAVHAGNINF…PILYTASQAC (227 aa). A Glycyl lysine isopeptide (Lys-Gly) (interchain with G-Cter in SUMO2) cross-link involves residue Lys57. The segment at 97–148 is interaction with JUP and CTNNB1; sequence VRKQGDLMKAAAGEFADDPCSSVKRGNMVRAARALLSAVTRLLILADMADVY. Residues Ser264, Ser268, Ser295, and Ser297 each carry the phosphoserine modification. Residues 325–394 are interaction with alpha-actinin; the sequence is TRDDRRERIV…AVMDHVSDSF (70 aa). Thr634 bears the Phosphothreonine mark. At Ser641 the chain carries Phosphoserine; by CK2. Thr645 carries the post-translational modification Phosphothreonine. Residues Ser652 and Ser655 each carry the phosphoserine; by CK1 modification. Thr658 is subject to Phosphothreonine; by CK1. A Glycyl lysine isopeptide (Lys-Gly) (interchain with G-Cter in SUMO2) cross-link involves residue Lys797. Ser851 is subject to Phosphoserine. The segment covering 864-880 has biased composition (basic and acidic residues); the sequence is PEKKPLVKREKQDETQT. The segment at 864–894 is disordered; sequence PEKKPLVKREKQDETQTKIKRASQKKHVNPV. Positions 881-891 are enriched in basic residues; sequence KIKRASQKKHV.

Belongs to the vinculin/alpha-catenin family. In terms of assembly, monomer and homodimer; the monomer preferentially binds to CTNNB1 and the homodimer to actin. Component of an cadherin:catenin adhesion complex composed of at least of CDH26, beta-catenin/CTNNB1, alpha-catenin/CTNNA1 and p120 catenin/CTNND1. Possible component of an E-cadherin/ catenin adhesion complex together with E-cadherin/CDH1 and beta-catenin/CTNNB1 or gamma-catenin/JUP; the complex is located to adherens junctions. The stable association of CTNNA1 is controversial as CTNNA1 was shown not to bind to F-actin when assembled in the complex. Alternatively, the CTNNA1-containing complex may be linked to F-actin by other proteins such as LIMA1. Binds AFDN and F-actin. Interacts with ARHGAP21. Interacts with AJUBA. Interacts with LIMA1. Interacts with vinculin/VCL. Interacts with TJP2/ZO2 (via N-terminus). Interacts with TJP1/ZO1 (via N-terminus). In terms of processing, sumoylated. Post-translationally, phosphorylation seems to contribute to the strength of cell-cell adhesion rather than to the basic capacity for cell-cell adhesion. Ubiquitously expressed in normal tissues. In terms of tissue distribution, abundantly expressed in brain and cerebellum, also expressed in the placenta, liver, lung, colon, heart, pancreas, stomach and thymus.

It is found in the cytoplasm. The protein localises to the cytoskeleton. The protein resides in the cell junction. Its subcellular location is the adherens junction. It localises to the cell membrane. It is found in the nucleus. Its function is as follows. Associates with the cytoplasmic domain of a variety of cadherins. The association of catenins to cadherins produces a complex which is linked to the actin filament network, and which seems to be of primary importance for cadherins cell-adhesion properties. Can associate with both E- and N-cadherins. Originally believed to be a stable component of E-cadherin/catenin adhesion complexes and to mediate the linkage of cadherins to the actin cytoskeleton at adherens junctions. In contrast, cortical actin was found to be much more dynamic than E-cadherin/catenin complexes and CTNNA1 was shown not to bind to F-actin when assembled in the complex suggesting a different linkage between actin and adherens junctions components. The homodimeric form may regulate actin filament assembly and inhibit actin branching by competing with the Arp2/3 complex for binding to actin filaments. Involved in the regulation of WWTR1/TAZ, YAP1 and TGFB1-dependent SMAD2 and SMAD3 nuclear accumulation. May play a crucial role in cell differentiation. The polypeptide is Catenin alpha-1 (Homo sapiens (Human)).